A 97-amino-acid chain; its full sequence is Class II hydrophobin A (97 aa).

The signal sequence occupies residues 1-15; sequence MKSVVFASLIASALA. 3 disulfides stabilise this stretch: cysteine 30-cysteine 79, cysteine 40-cysteine 53, and cysteine 80-cysteine 91.

The protein belongs to the cerato-ulmin hydrophobin family.

The protein localises to the secreted. The protein resides in the cell wall. Its subcellular location is the vacuole. It localises to the cytoplasmic vesicle. Functionally, aerial growth, conidiation, and dispersal of filamentous fungi in the environment rely upon a capability of their secreting small amphipathic proteins called hydrophobins (HPBs) with low sequence identity. Class I can self-assemble into an outermost layer of rodlet bundles on aerial cell surfaces, conferring cellular hydrophobicity that supports fungal growth, development and dispersal; whereas Class II form highly ordered films at water-air interfaces through intermolecular interactions but contribute nothing to the rodlet structure. Hyd2A contributes to certain cell wall-related features, such as hydrophobicity but is not involved in cell wall-related events during fungal proliferation in host hemocoel. Does not contribute to conidial hydrophobicity. Involved in insect hemocoel colonization independent of cell hydrophobicity, as well as in the asexual development. In Beauveria bassiana (strain ARSEF 2860) (White muscardine disease fungus), this protein is Class II hydrophobin A.